Reading from the N-terminus, the 125-residue chain is uncharacterized protein (125 aa).

The helical transmembrane segment at 7 to 29 (NCMFLYVYTDVCVRLCASIFYIM) threads the bilayer.

It localises to the membrane. This is an uncharacterized protein from Saccharomyces cerevisiae (strain ATCC 204508 / S288c) (Baker's yeast).